Reading from the N-terminus, the 574-residue chain is Septation ring formation regulator EzrA (574 aa).

At 1–7 the chain is on the extracellular side; it reads MSNGLII. A helical membrane pass occupies residues 8 to 26; the sequence is LIIVIAVALILAYVAAVVL. Residues 27–574 are Cytoplasmic-facing; the sequence is RKRNETLLDS…YEKTRENIRF (548 aa). 3 coiled-coil regions span residues 104-141, 267-424, and 456-524; these read LKAK…EAKN, NITQ…QKVN, and ASDH…SIQE.

This sequence belongs to the EzrA family.

The protein resides in the cell membrane. Functionally, negative regulator of FtsZ ring formation; modulates the frequency and position of FtsZ ring formation. Inhibits FtsZ ring formation at polar sites. Interacts either with FtsZ or with one of its binding partners to promote depolymerization. This is Septation ring formation regulator EzrA from Streptococcus gordonii (strain Challis / ATCC 35105 / BCRC 15272 / CH1 / DL1 / V288).